A 756-amino-acid polypeptide reads, in one-letter code: MVVTRSARAKASIQAASAESSGQKSFAANGIQAHPESSTGSDARTTAESQTTGKQSLIPRTPKARKRKSRTTGSLPKGTEPSTDGETSEAESNYSVSEHHDTILRVTRRRQILIACSPVSSVRKKPKVTPTKESYTEEIVSEAESHVSGISRIVLPTEKTTGARRSKAKSLTDPSQESHTEAISDAETSSSDISFSGIATRRTRSMQRKLKAQTEKKDSKIVPGNEKQIVGTPVNSEDSDTRQTSHLQARSLSEINKPNFYNNDFDDDFSHRSSENILTVHEQANVESLKETKQNCKDLDEDANGITDEGKEINEKSSQLKNLSELQDTSLQQLVSQRHSTPQNKNAVSVHSNLNSEAVMKSLTQTFATVEVGRWNNNKKSPIKASDLTKFGDCGGSDDEEESTVISVSEDMNSEGNVDFECDTKLYTSAPNTSQGKDNSVLLVLSSDESQQSENSENEEDTLCFVENSGQRESLSGDTGSLSCDNALFVIDTTPGMSADKNFYLEEEDKASEVAIEEEKEEEEDEKSEEDSSDHDENEDEFSDEEDFLNSTKAKLLKLTSSSIDPGLSIKQLGGLYINFNADKLQSNKRTLTQIKEKKKNELLQKAVITPDFEKNHCVPPYSESKYQLQKKRRKERQKTAGDGWFGMKAPEMTNELKNDLKALKMRASMDPKRFYKKNDRDGFPKYFQIGTIVDNPADFYHSRIPKKQRKRTIVEELLADSEFRRYNRRKYSEIMAEKAANAAGKKFRKKKKFRN.

The interval 1-99 (MVVTRSARAK…AESNYSVSEH (99 aa)) is disordered. Low complexity predominate over residues 9–21 (AKASIQAASAESS). Residue Ser-21 is modified to Phosphoserine. Polar residues-rich tracts occupy residues 35 to 55 (PESSTGSDARTTAESQTTGKQ) and 80 to 96 (EPSTDGETSEAESNYSV). Ser-117 is subject to Phosphoserine. Thr-129 is modified (phosphothreonine). Residues Ser-141, Ser-145, Ser-148, Ser-184, and Ser-194 each carry the phosphoserine modification. The disordered stretch occupies residues 156-261 (PTEKTTGARR…LSEINKPNFY (106 aa)). Positions 201-211 (RRTRSMQRKLK) are enriched in basic residues. Glycyl lysine isopeptide (Lys-Gly) (interchain with G-Cter in SUMO2) cross-links involve residues Lys-217 and Lys-220. A Phosphothreonine modification is found at Thr-232. A phosphoserine mark is found at Ser-239, Ser-251, and Ser-253. The segment covering 242 to 256 (RQTSHLQARSLSEIN) has biased composition (polar residues). Glycyl lysine isopeptide (Lys-Gly) (interchain with G-Cter in SUMO2) cross-links involve residues Lys-257, Lys-316, and Lys-321. Residues Ser-324 and Ser-330 each carry the phosphoserine modification. A Glycyl lysine isopeptide (Lys-Gly) (interchain with G-Cter in SUMO2) cross-link involves residue Lys-345. Ser-381 carries the phosphoserine modification. Lys-384 participates in a covalent cross-link: Glycyl lysine isopeptide (Lys-Gly) (interchain with G-Cter in SUMO2). Residues Ser-434 and Ser-512 each carry the phosphoserine modification. The stretch at 505-542 (LEEEDKASEVAIEEEKEEEEDEKSEEDSSDHDENEDEF) forms a coiled coil. Residues 510–547 (KASEVAIEEEKEEEEDEKSEEDSSDHDENEDEFSDEED) form a disordered region. A tdBR region; mediates interaction with DNTT region spans residues 548–605 (FLNSTKAKLLKLTSSSIDPGLSIKQLGGLYINFNADKLQSNKRTLTQIKEKKKNELLQ). Lys-558 participates in a covalent cross-link: Glycyl lysine isopeptide (Lys-Gly) (interchain with G-Cter in SUMO2). Position 569 is a phosphoserine (Ser-569). Glycyl lysine isopeptide (Lys-Gly) (interchain with G-Cter in SUMO2) cross-links involve residues Lys-584 and Lys-606. Phosphothreonine is present on Thr-610. Residues Lys-626, Lys-649, Lys-658, Lys-686, and Lys-731 each participate in a glycyl lysine isopeptide (Lys-Gly) (interchain with G-Cter in SUMO2) cross-link.

As to quaternary structure, forms a ternary complex with DNTT and core histone; interaction with PCNA releases DNTT and H2A/H2B histones from this ternary complex. Interacts with ESR1, ESR2, PPARG and RXRA. Part of the small subunit (SSU) processome, composed of more than 70 proteins and the RNA chaperone small nucleolar RNA (snoRNA) U3. As to expression, widely expressed with higher levels in testis.

It is found in the nucleus. It localises to the nucleolus. Its function is as follows. Regulates the transcriptional activity of DNTT and ESR1. May function as a chromatin remodeling protein. Part of the small subunit (SSU) processome, first precursor of the small eukaryotic ribosomal subunit. During the assembly of the SSU processome in the nucleolus, many ribosome biogenesis factors, an RNA chaperone and ribosomal proteins associate with the nascent pre-rRNA and work in concert to generate RNA folding, modifications, rearrangements and cleavage as well as targeted degradation of pre-ribosomal RNA by the RNA exosome. The chain is Deoxynucleotidyltransferase terminal-interacting protein 2 from Homo sapiens (Human).